Here is a 240-residue protein sequence, read N- to C-terminus: Octanoyltransferase (240 aa).

In terms of domain architecture, BPL/LPL catalytic spans 31-216 (GQVGDTLLLL…HLCAVFDLEP (186 aa)). Residues 76–83 (RGGGATYH), 145–147 (AIG), and 159–161 (GLA) contribute to the substrate site. The active-site Acyl-thioester intermediate is the cysteine 177.

It belongs to the LipB family.

The protein localises to the cytoplasm. The catalysed reaction is octanoyl-[ACP] + L-lysyl-[protein] = N(6)-octanoyl-L-lysyl-[protein] + holo-[ACP] + H(+). Its pathway is protein modification; protein lipoylation via endogenous pathway; protein N(6)-(lipoyl)lysine from octanoyl-[acyl-carrier-protein]: step 1/2. Catalyzes the transfer of endogenously produced octanoic acid from octanoyl-acyl-carrier-protein onto the lipoyl domains of lipoate-dependent enzymes. Lipoyl-ACP can also act as a substrate although octanoyl-ACP is likely to be the physiological substrate. This is Octanoyltransferase from Roseiflexus sp. (strain RS-1).